Consider the following 499-residue polypeptide: Glycerol kinase (499 aa).

An ADP-binding site is contributed by Thr-13. ATP contacts are provided by Thr-13, Thr-14, and Ser-15. Residue Thr-13 participates in sn-glycerol 3-phosphate binding. Arg-17 provides a ligand contact to ADP. Sn-glycerol 3-phosphate-binding residues include Arg-83, Glu-84, Tyr-135, and Asp-245. Arg-83, Glu-84, Tyr-135, Asp-245, and Gln-246 together coordinate glycerol. ADP is bound by residues Thr-267 and Gly-310. 4 residues coordinate ATP: Thr-267, Gly-310, Gln-314, and Gly-411. Residues Gly-411 and Asn-415 each contribute to the ADP site.

Belongs to the FGGY kinase family.

The catalysed reaction is glycerol + ATP = sn-glycerol 3-phosphate + ADP + H(+). It functions in the pathway polyol metabolism; glycerol degradation via glycerol kinase pathway; sn-glycerol 3-phosphate from glycerol: step 1/1. With respect to regulation, inhibited by fructose 1,6-bisphosphate (FBP). Its function is as follows. Key enzyme in the regulation of glycerol uptake and metabolism. Catalyzes the phosphorylation of glycerol to yield sn-glycerol 3-phosphate. The sequence is that of Glycerol kinase from Stenotrophomonas maltophilia (strain R551-3).